Reading from the N-terminus, the 217-residue chain is Adenylate kinase (217 aa).

Residue glycine 10–threonine 15 coordinates ATP. Positions serine 30–valine 59 are NMP. AMP-binding positions include threonine 31, arginine 36, alanine 57–valine 59, glycine 85–arginine 88, and glutamine 92. The LID stretch occupies residues glycine 126 to aspartate 163. Arginine 127 is an ATP binding site. The Zn(2+) site is built by cysteine 130, cysteine 133, cysteine 150, and cysteine 153. Arginine 160 and arginine 171 together coordinate AMP. An ATP-binding site is contributed by glycine 199.

It belongs to the adenylate kinase family. As to quaternary structure, monomer.

It is found in the cytoplasm. It catalyses the reaction AMP + ATP = 2 ADP. Its pathway is purine metabolism; AMP biosynthesis via salvage pathway; AMP from ADP: step 1/1. In terms of biological role, catalyzes the reversible transfer of the terminal phosphate group between ATP and AMP. Plays an important role in cellular energy homeostasis and in adenine nucleotide metabolism. The polypeptide is Adenylate kinase (Geotalea uraniireducens (strain Rf4) (Geobacter uraniireducens)).